Consider the following 276-residue polypeptide: AT-hook motif nuclear-localized protein 17 (276 aa).

Over residues 1–10 the composition is skewed to basic and acidic residues; that stretch reads MKGEYREQKS. Disordered stretches follow at residues 1–80 and 212–248; these read MKGE…RDTD and AEEEQKHSAGTGEREGQSPPVSGGGEESGQMAGSGGE. 2 stretches are compositionally biased toward low complexity: residues 20 to 31 and 40 to 49; these read HQQQQQQQQQQH and SSTVTPTVDD. The a.T hook DNA-binding region spans 56–68; the sequence is RRPRGRPPGSKNK. The PPC domain maps to 80–230; that stretch reads DPPMSPYILE…GTGEREGQSP (151 aa). Positions 212 to 227 are enriched in basic and acidic residues; the sequence is AEEEQKHSAGTGEREG. Residues 233 to 248 show a composition bias toward gly residues; the sequence is SGGGEESGQMAGSGGE.

The protein localises to the nucleus. Transcription factor that specifically binds AT-rich DNA sequences related to the nuclear matrix attachment regions (MARs). This Arabidopsis thaliana (Mouse-ear cress) protein is AT-hook motif nuclear-localized protein 17.